The following is a 344-amino-acid chain: Selenide, water dikinase (344 aa).

Residue cysteine 15 is part of the active site. Residues lysine 18 and threonine 46 to aspartate 48 each bind ATP. Mg(2+) is bound at residue aspartate 49. ATP contacts are provided by residues aspartate 66, aspartate 89, and glycine 137–serine 139. Residue aspartate 89 coordinates Mg(2+). Aspartate 225 provides a ligand contact to Mg(2+).

This sequence belongs to the selenophosphate synthase 1 family. Class I subfamily. In terms of assembly, homodimer. Requires Mg(2+) as cofactor.

It catalyses the reaction hydrogenselenide + ATP + H2O = selenophosphate + AMP + phosphate + 2 H(+). Functionally, synthesizes selenophosphate from selenide and ATP. The chain is Selenide, water dikinase from Colwellia psychrerythraea (strain 34H / ATCC BAA-681) (Vibrio psychroerythus).